Consider the following 367-residue polypeptide: Folliculin-like protein bhd1 (367 aa).

Disordered regions lie at residues 41-75 and 92-115; these read RSIG…QSST and SKGP…SPIS. The span at 54–64 shows a compositional bias: basic and acidic residues; it reads EAFKNELDNRN. 2 stretches are compositionally biased toward polar residues: residues 65 to 75 and 99 to 115; these read NADSQSLQSST and RVNS…SPIS. The 172-residue stretch at 131-302 folds into the uDENN FLCN/SMCR8-type domain; sequence FSVPDVQPRL…SNIGTAPSYE (172 aa).

This sequence belongs to the folliculin family.

It is found in the nucleus. The protein localises to the cytoplasm. The sequence is that of Folliculin-like protein bhd1 (bhd1) from Schizosaccharomyces pombe (strain 972 / ATCC 24843) (Fission yeast).